Consider the following 576-residue polypeptide: DNA mismatch repair protein MutL (576 aa).

It belongs to the DNA mismatch repair MutL/HexB family.

This protein is involved in the repair of mismatches in DNA. It is required for dam-dependent methyl-directed DNA mismatch repair. May act as a 'molecular matchmaker', a protein that promotes the formation of a stable complex between two or more DNA-binding proteins in an ATP-dependent manner without itself being part of a final effector complex. The protein is DNA mismatch repair protein MutL of Chlamydia trachomatis serovar L2 (strain ATCC VR-902B / DSM 19102 / 434/Bu).